Reading from the N-terminus, the 413-residue chain is Alpha-1-antiproteinase (413 aa).

An N-terminal signal peptide occupies residues Met-1 to Ala-24. Ser-33 is modified (phosphoserine). 3 N-linked (GlcNAc...) asparagine glycosylation sites follow: Asn-64, Asn-101, and Asn-265. Residues Ala-368 to His-387 form an RCL region. Ser-378 is subject to Phosphoserine.

Belongs to the serpin family. Interacts with CELA2A. Interacts with ERGIC3 and LMAN1/ERGIC53. Interacts with PRSS1/Trypsin.

The protein resides in the secreted. In terms of biological role, inhibitor of serine proteases. The primary target is elastase, but also has a moderate affinity for plasmin and thrombin. This chain is Alpha-1-antiproteinase (Serpina1), found in Mus saxicola (Brown spiny mouse).